We begin with the raw amino-acid sequence, 91 residues long: Acylphosphatase (91 aa).

Residues 3 to 91 (CLKAVVKGKV…GNYGDFHIKY (89 aa)) enclose the Acylphosphatase-like domain. Active-site residues include R18 and N36.

This sequence belongs to the acylphosphatase family.

It catalyses the reaction an acyl phosphate + H2O = a carboxylate + phosphate + H(+). This chain is Acylphosphatase (acyP), found in Dehalococcoides mccartyi (strain ATCC BAA-2266 / KCTC 15142 / 195) (Dehalococcoides ethenogenes (strain 195)).